Reading from the N-terminus, the 157-residue chain is 2-C-methyl-D-erythritol 2,4-cyclodiphosphate synthase (157 aa).

Residues D8 and H10 each contribute to the a divalent metal cation site. Residues 8 to 10 (DVH) and 34 to 35 (HS) contribute to the 4-CDP-2-C-methyl-D-erythritol 2-phosphate site. H42 contributes to the a divalent metal cation binding site. 4-CDP-2-C-methyl-D-erythritol 2-phosphate contacts are provided by residues 56–58 (DIG), 61–65 (FPDTD), 100–106 (AQAPKMA), 132–135 (TTTE), F139, and R142.

This sequence belongs to the IspF family. As to quaternary structure, homotrimer. Requires a divalent metal cation as cofactor.

The catalysed reaction is 4-CDP-2-C-methyl-D-erythritol 2-phosphate = 2-C-methyl-D-erythritol 2,4-cyclic diphosphate + CMP. It functions in the pathway isoprenoid biosynthesis; isopentenyl diphosphate biosynthesis via DXP pathway; isopentenyl diphosphate from 1-deoxy-D-xylulose 5-phosphate: step 4/6. Its function is as follows. Involved in the biosynthesis of isopentenyl diphosphate (IPP) and dimethylallyl diphosphate (DMAPP), two major building blocks of isoprenoid compounds. Catalyzes the conversion of 4-diphosphocytidyl-2-C-methyl-D-erythritol 2-phosphate (CDP-ME2P) to 2-C-methyl-D-erythritol 2,4-cyclodiphosphate (ME-CPP) with a corresponding release of cytidine 5-monophosphate (CMP). This is 2-C-methyl-D-erythritol 2,4-cyclodiphosphate synthase from Pseudomonas putida (strain GB-1).